The primary structure comprises 294 residues: Fatty acyl-CoA reductase Rv0547c (294 aa).

Residues Ser49, Ser50, Ile52, Arg72, Asp97, Leu98, Asn124, Tyr192, Lys196, Val225, and Thr227 each contribute to the NADP(+) site. Tyr192 functions as the Proton acceptor in the catalytic mechanism.

The protein belongs to the short-chain dehydrogenases/reductases (SDR) family.

Its subcellular location is the host mitochondrion. The enzyme catalyses hexadecanal + NADP(+) + CoA = hexadecanoyl-CoA + NADPH + H(+). Oxidoreductase that promotes the persistence of M.tuberculosis in host macrophages by reprogramming the fatty acid metabolism in host mitochondria. When localized in the host mitochondria, it potentially acts on unknown lipid substrates and converts them into products that directly or indirectly alter the lipid profile of the mitochondria. This change in lipid profile results in increased mitochondrial membrane fluidity, enhanced endogenous fatty acid oxidation and increased mitochondrial spare respiratory capacity. All these events eventually favor M.tuberculosis persistence in the host macrophages. In vitro, can catalyze the NADPH-dependent reduction of palmitoyl-CoA (hexadecanoyl-CoA). The protein is Fatty acyl-CoA reductase Rv0547c of Mycobacterium tuberculosis (strain ATCC 25618 / H37Rv).